Reading from the N-terminus, the 524-residue chain is MKKFDKLGLDNIKEIFHNLSYDELNAHEKANNEGLSTDNDTFCVDTGIFTGRSPKDKYFVKQDPSSKYIAWGKVNQPITKELFDKLLTKAKQELSGKKIYVQDVFCGASLQSRKAVRFVTEIAWQAHFVKNMFIRPSQEELENFKADFIVYNACKCINEDYKQDGLNSEVFVIFNVEENIAVIGGTWYGGEMKKGIFSMMNYWLPLENKLSMHCSANVGEKDDVALFFGLSGTGKTTLSTDPKRRLIGDDEHGWDDEGVFNFEGGCYAKTINLDPEHEPEIYGAIKRNALLENVVLRADKSVDYADASKTENTRVSYPIEHIENHEPSLKAGHPKNIIFLSADAFGILPPVSKLSKEQAMYYFLSGYTAKVAGTERGITEPQATFSACFGEPFMPLHPTVYARLLGEKIEKHEVNVYLVNTGWSGGSYGVGKRMSIKATRACINAILDGSITKCEFENFEVFDLAIPKALEGVESVLLNPINTWLDKNAYIATRDKLAHMFIQNFKRYEDVKEGIEFSKFGPKI.

3 residues coordinate substrate: arginine 52, tyrosine 188, and lysine 194. Residues lysine 194, histidine 213, and 229-237 (GLSGTGKTT) contribute to the ATP site. Mn(2+) is bound by residues lysine 194 and histidine 213. Residue aspartate 250 coordinates Mn(2+). Glutamate 278, arginine 314, and threonine 439 together coordinate ATP. Arginine 314 lines the substrate pocket.

This sequence belongs to the phosphoenolpyruvate carboxykinase (ATP) family. Mn(2+) is required as a cofactor.

Its subcellular location is the cytoplasm. The enzyme catalyses oxaloacetate + ATP = phosphoenolpyruvate + ADP + CO2. It participates in carbohydrate biosynthesis; gluconeogenesis. In terms of biological role, involved in the gluconeogenesis. Catalyzes the conversion of oxaloacetate (OAA) to phosphoenolpyruvate (PEP) through direct phosphoryl transfer between the nucleoside triphosphate and OAA. The chain is Phosphoenolpyruvate carboxykinase (ATP) from Campylobacter jejuni subsp. jejuni serotype O:2 (strain ATCC 700819 / NCTC 11168).